Here is a 519-residue protein sequence, read N- to C-terminus: Arabinose import ATP-binding protein AraG 2 (519 aa).

2 ABC transporter domains span residues 29–264 and 264–515; these read LSLD…MVGR and RSIE…LIKL. ATP is bound at residue 61–68; that stretch reads GENGAGKS.

It belongs to the ABC transporter superfamily. Arabinose importer (TC 3.A.1.2.2) family. The complex is composed of two ATP-binding proteins (AraG), two transmembrane proteins (AraH) and a solute-binding protein (AraF).

Its subcellular location is the cell inner membrane. The catalysed reaction is L-arabinose(out) + ATP + H2O = L-arabinose(in) + ADP + phosphate + H(+). Functionally, part of the ABC transporter complex AraFGH involved in arabinose import. Responsible for energy coupling to the transport system. In Burkholderia ambifaria (strain ATCC BAA-244 / DSM 16087 / CCUG 44356 / LMG 19182 / AMMD) (Burkholderia cepacia (strain AMMD)), this protein is Arabinose import ATP-binding protein AraG 2.